We begin with the raw amino-acid sequence, 395 residues long: ATP synthase subunit beta, chloroplastic (395 aa).

Glycine 72 to threonine 79 is an ATP binding site.

It belongs to the ATPase alpha/beta chains family. F-type ATPases have 2 components, CF(1) - the catalytic core - and CF(0) - the membrane proton channel. CF(1) has five subunits: alpha(3), beta(3), gamma(1), delta(1), epsilon(1). CF(0) has four main subunits: a(1), b(1), b'(1) and c(9-12).

It is found in the plastid. Its subcellular location is the chloroplast thylakoid membrane. The catalysed reaction is ATP + H2O + 4 H(+)(in) = ADP + phosphate + 5 H(+)(out). Functionally, produces ATP from ADP in the presence of a proton gradient across the membrane. The catalytic sites are hosted primarily by the beta subunits. The chain is ATP synthase subunit beta, chloroplastic from Blechnum occidentale (Hammock fern).